The sequence spans 124 residues: MNALGRHILAEVYGCDSRILDDVEMIEDIMVQAAIATGAEVREVAFHKFNPQGVSGVVVISESHLTIHTWPELGYAAVDVFTCGDHVNPWDGVNYIARMLKAENMTATEVKRGVFEKPVKVANF.

Residue serine 63 is the Schiff-base intermediate with substrate; via pyruvic acid of the active site. At serine 63 the chain carries Pyruvic acid (Ser); by autocatalysis. Histidine 68 (proton acceptor; for processing activity) is an active-site residue. The Proton donor; for catalytic activity role is filled by cysteine 83.

Belongs to the prokaryotic AdoMetDC family. Type 1 subfamily. As to quaternary structure, heterotetramer of two alpha and two beta chains arranged as a dimer of alpha/beta heterodimers. Requires pyruvate as cofactor. In terms of processing, is synthesized initially as an inactive proenzyme. Formation of the active enzyme involves a self-maturation process in which the active site pyruvoyl group is generated from an internal serine residue via an autocatalytic post-translational modification. Two non-identical subunits are generated from the proenzyme in this reaction, and the pyruvate is formed at the N-terminus of the alpha chain, which is derived from the carboxyl end of the proenzyme. The post-translation cleavage follows an unusual pathway, termed non-hydrolytic serinolysis, in which the side chain hydroxyl group of the serine supplies its oxygen atom to form the C-terminus of the beta chain, while the remainder of the serine residue undergoes an oxidative deamination to produce ammonia and the pyruvoyl group blocking the N-terminus of the alpha chain.

The catalysed reaction is S-adenosyl-L-methionine + H(+) = S-adenosyl 3-(methylsulfanyl)propylamine + CO2. It functions in the pathway amine and polyamine biosynthesis; S-adenosylmethioninamine biosynthesis; S-adenosylmethioninamine from S-adenosyl-L-methionine: step 1/1. In terms of biological role, catalyzes the decarboxylation of S-adenosylmethionine to S-adenosylmethioninamine (dcAdoMet), the propylamine donor required for the synthesis of the polyamines spermine and spermidine from the diamine putrescine. The sequence is that of S-adenosylmethionine decarboxylase proenzyme from Caldanaerobacter subterraneus subsp. tengcongensis (strain DSM 15242 / JCM 11007 / NBRC 100824 / MB4) (Thermoanaerobacter tengcongensis).